A 339-amino-acid chain; its full sequence is D-erythrose-4-phosphate dehydrogenase (339 aa).

11–12 (RI) is an NAD(+) binding site. Residues 158-160 (SCT), Arg204, 217-218 (TK), and Arg240 each bind substrate. Cys159 functions as the Nucleophile in the catalytic mechanism. Asn322 lines the NAD(+) pocket.

The protein belongs to the glyceraldehyde-3-phosphate dehydrogenase family. Epd subfamily. As to quaternary structure, homotetramer.

It localises to the cytoplasm. It catalyses the reaction D-erythrose 4-phosphate + NAD(+) + H2O = 4-phospho-D-erythronate + NADH + 2 H(+). It participates in cofactor biosynthesis; pyridoxine 5'-phosphate biosynthesis; pyridoxine 5'-phosphate from D-erythrose 4-phosphate: step 1/5. Catalyzes the NAD-dependent conversion of D-erythrose 4-phosphate to 4-phosphoerythronate. This chain is D-erythrose-4-phosphate dehydrogenase, found in Aliivibrio fischeri (strain MJ11) (Vibrio fischeri).